The following is a 111-amino-acid chain: Large ribosomal subunit protein uL23 (111 aa).

It belongs to the universal ribosomal protein uL23 family. In terms of assembly, part of the 50S ribosomal subunit. Contacts protein L29, and trigger factor when it is bound to the ribosome.

One of the early assembly proteins it binds 23S rRNA. One of the proteins that surrounds the polypeptide exit tunnel on the outside of the ribosome. Forms the main docking site for trigger factor binding to the ribosome. The protein is Large ribosomal subunit protein uL23 of Nitrosospira multiformis (strain ATCC 25196 / NCIMB 11849 / C 71).